The primary structure comprises 813 residues: DNA ligase (813 aa).

NAD(+) is bound by residues 41–45 (DAEYD), 90–91 (SI), and E127. K129 serves as the catalytic N6-AMP-lysine intermediate. 4 residues coordinate NAD(+): R150, E189, K307, and K331. Residues C440, C443, C458, and C464 each contribute to the Zn(2+) site. Residues 729–813 (AEEGALSGKT…LLQNPPGDSA (85 aa)) enclose the BRCT domain.

Belongs to the NAD-dependent DNA ligase family. LigA subfamily. It depends on Mg(2+) as a cofactor. Mn(2+) is required as a cofactor.

It carries out the reaction NAD(+) + (deoxyribonucleotide)n-3'-hydroxyl + 5'-phospho-(deoxyribonucleotide)m = (deoxyribonucleotide)n+m + AMP + beta-nicotinamide D-nucleotide.. Its function is as follows. DNA ligase that catalyzes the formation of phosphodiester linkages between 5'-phosphoryl and 3'-hydroxyl groups in double-stranded DNA using NAD as a coenzyme and as the energy source for the reaction. It is essential for DNA replication and repair of damaged DNA. The chain is DNA ligase from Ralstonia nicotianae (strain ATCC BAA-1114 / GMI1000) (Ralstonia solanacearum).